A 237-amino-acid chain; its full sequence is Protein-S-isoprenylcysteine O-methyltransferase (237 aa).

4 helical membrane-spanning segments follow: residues 26-46, 53-73, 92-112, and 116-136; these read SSAISCGLGIGIGFGIALFIF, FGIYLAGLCTFHMWEYIWVTM, FNMALLISFIEFWIEWYFFPS, and FSLWWVGAICMVFGQIVRSVA. Residues Q149, 156–159, Y164, and 169–172 contribute to the S-adenosyl-L-methionine site; these read HVLV and HPSY. Residues 184–204 form a helical membrane-spanning segment; the sequence is VILMNPISIIGFGWASWSFFS. R206 lines the substrate pocket. E210 serves as a coordination point for S-adenosyl-L-methionine.

It belongs to the class VI-like SAM-binding methyltransferase superfamily. Isoprenylcysteine carboxyl methyltransferase family.

The protein resides in the endoplasmic reticulum membrane. It carries out the reaction [protein]-C-terminal S-[(2E,6E)-farnesyl]-L-cysteine + S-adenosyl-L-methionine = [protein]-C-terminal S-[(2E,6E)-farnesyl]-L-cysteine methyl ester + S-adenosyl-L-homocysteine. Methylates the C-terminal cysteine residues of small GTPases and the heterotrimeric G protein gamma subunit in response to cAMP. The methylation is required for intercellular signaling and regulation of cAMP waves propagation. It also seems to induce the activity of car1, a G protein-coupled receptor which senses extracellular cAMP during the aggregation phase of development. This Dictyostelium discoideum (Social amoeba) protein is Protein-S-isoprenylcysteine O-methyltransferase (icmt-1).